The chain runs to 125 residues: U-scoloptoxin(05)-Sm1a (125 aa).

The first 20 residues, 1 to 20 (MNVLYTKIFFILILTRTSSA), serve as a signal peptide directing secretion.

It belongs to the scoloptoxin-05 family. Post-translationally, contains 4 disulfide bonds. Expressed by the venom gland.

It localises to the secreted. This is U-scoloptoxin(05)-Sm1a from Scolopendra morsitans (Tanzanian blue ringleg centipede).